The sequence spans 271 residues: Phosphonoacetaldehyde hydrolase (271 aa).

The Nucleophile role is filled by aspartate 12. The Mg(2+) site is built by aspartate 12 and alanine 14. Catalysis depends on lysine 54, which acts as the Schiff-base intermediate with substrate. Aspartate 188 provides a ligand contact to Mg(2+).

It belongs to the HAD-like hydrolase superfamily. PhnX family. As to quaternary structure, homodimer. It depends on Mg(2+) as a cofactor.

It carries out the reaction phosphonoacetaldehyde + H2O = acetaldehyde + phosphate + H(+). Its function is as follows. Involved in phosphonate degradation. The polypeptide is Phosphonoacetaldehyde hydrolase (Aliivibrio salmonicida (strain LFI1238) (Vibrio salmonicida (strain LFI1238))).